The chain runs to 55 residues: Large ribosomal subunit protein bL33 (55 aa).

This sequence belongs to the bacterial ribosomal protein bL33 family.

The polypeptide is Large ribosomal subunit protein bL33 (Rhizobium meliloti (strain 1021) (Ensifer meliloti)).